A 68-amino-acid chain; its full sequence is DNA-directed RNA polymerase subunit Rpo10 (68 aa).

Residues C7, C10, C44, and C45 each coordinate Zn(2+).

It belongs to the archaeal Rpo10/eukaryotic RPB10 RNA polymerase subunit family. In terms of assembly, part of the RNA polymerase complex. Requires Zn(2+) as cofactor.

The protein resides in the cytoplasm. The enzyme catalyses RNA(n) + a ribonucleoside 5'-triphosphate = RNA(n+1) + diphosphate. In terms of biological role, DNA-dependent RNA polymerase (RNAP) catalyzes the transcription of DNA into RNA using the four ribonucleoside triphosphates as substrates. This chain is DNA-directed RNA polymerase subunit Rpo10, found in Methanococcus maripaludis (strain C5 / ATCC BAA-1333).